The sequence spans 806 residues: Lysine-specific demethylase JMJ15 (806 aa).

The segment at 1–43 is disordered; it reads MEPFSAAQNKEDKDTSVEPPRRRCHRKNKGTNVEPPSSPYHPK. Residues 9-21 are compositionally biased toward basic and acidic residues; the sequence is NKEDKDTSVEPPR. Positions 61–102 constitute a JmjN domain; sequence APVFHPTSEEFEDTLAYIEKIRPLAESFGICRIVPPSNWSPP. Residues 128–176 are disordered; that stretch reads NRGPVKKKTPKGRKRKRGKYSRTVAPKKRNGSVSKSVSTPKATEEENFG. Basic residues predominate over residues 131–157; that stretch reads PVKKKTPKGRKRKRGKYSRTVAPKKRN. A Nuclear localization signal motif is present at residues 132-139; sequence VKKKTPKG. A compositionally biased stretch (polar residues) spans 158–168; sequence GSVSKSVSTPK. The JmjC domain occupies 261–427; it reads KYISSGWNLN…HGQNAVEIYS (167 aa). Fe cation is bound by residues His-307, Glu-309, and His-395. Cys-514, Cys-517, Cys-528, Cys-531, Cys-539, His-542, Cys-545, and Cys-547 together coordinate Zn(2+). The C5HC2 zinc finger occupies 514-566; it reads CISCFSDLHLSATGCKNCSSLEEYGCTKHDICSCEGKDRFIFLRYTIDELSSL. The FYR N-terminal domain maps to 629 to 687; it reads IMDLAAYHVEPINLGFLVVGKLWCNKHAIFPKGFKSRVKFYNVQDPMRISYYVSEIVDA. Residues 689-775 form the FYR C-terminal domain; it reads LLGPLFKVTL…HGQVEYWNHK (87 aa).

This sequence belongs to the JARID1 histone demethylase family. It depends on Fe(2+) as a cofactor. Expressed in roots, cotyledons, shoot apex, rosette and cauline leaves, stems, inflorescences and siliques. Expressed at low levels during vegetative growth but to higher levels in young floral organs.

The protein localises to the nucleus. It carries out the reaction N(6),N(6),N(6)-trimethyl-L-lysyl(4)-[histone H3] + 2-oxoglutarate + O2 = N(6),N(6)-dimethyl-L-lysyl(4)-[histone H3] + formaldehyde + succinate + CO2. Functionally, histone demethylase that demethylates 'Lys-4' (H3K4me) of histone H3 with a specific activity for H3K4me3. No activity on H3K4me2, H3K4me1, H3K9me3/2, H3K27me3/2 and H3K36me3/2. Involved in the control of flowering time by demethylating H3K4me3 at the FLC locus and repressing its expression. The repression of FLC level and reduction in H3K4me3 at the FLC locus results in induction of the flowering activator FT, which is a downstream target of FLC. Promotes salt tolerance by down-regulating the expression of several transcriptions factors involved in stress responses via H3K4me3 and H3K4me2 demethylation. This is Lysine-specific demethylase JMJ15 from Arabidopsis thaliana (Mouse-ear cress).